The primary structure comprises 626 residues: Colicin-Ia (626 aa).

Residues 23 to 225 form a translocation (T) region; it reads EIMAVDIYVN…TRLSELEKNG (203 aa). Polar residues predominate over residues 276–286; sequence QQLTQQKNTPD. Residues 276-308 form a disordered region; sequence QQLTQQKNTPDGKTIVSPEKFPGRSSTNHSIVV. The segment at 282 to 385 is receptor-binding (R); it reads KNTPDGKTIV…LRQRLLDARN (104 aa). Residues 450 to 626 form a channel (C) region; sequence KDAINFTTEF…VEKANKFWGI (177 aa). 2 consecutive transmembrane segments (helical) span residues 580–594 and 597–612; these read ATAL…LTGS and GIIG…GALI.

Belongs to the channel forming colicin family.

The protein resides in the cell membrane. This colicin is a channel-forming colicin. This class of transmembrane toxins depolarize the cytoplasmic membrane, leading to dissipation of cellular energy. Functionally, colicins are polypeptide toxins produced by and active against E.coli and closely related bacteria. This Escherichia coli protein is Colicin-Ia (cia).